Consider the following 297-residue polypeptide: 32 kDa beta-galactoside-binding lectin lec-3 (297 aa).

Galectin domains lie at 11 to 142 and 151 to 290; these read YRSK…VQWG and ESGI…IQVV. 224 to 230 serves as a coordination point for a beta-D-galactoside; sequence WGNEERE.

Its function is as follows. Binds galactose. This Caenorhabditis elegans protein is 32 kDa beta-galactoside-binding lectin lec-3 (lec-3).